A 1033-amino-acid polypeptide reads, in one-letter code: Kinesin-like protein KIN-4A (1033 aa).

Positions Cys-11 to Ile-366 constitute a Kinesin motor domain. Gly-89–Thr-96 contacts ATP. The interval Gln-443–Arg-462 is disordered. Residues Asp-453 to Arg-462 are compositionally biased toward basic and acidic residues. The stretch at Ala-525–Gln-638 forms a coiled coil. The disordered stretch occupies residues Asp-763–Leu-785. Residues Ile-863–Leu-895 adopt a coiled-coil conformation.

Belongs to the TRAFAC class myosin-kinesin ATPase superfamily. Kinesin family. KIN-4 subfamily. As to quaternary structure, homodimer. Expressed in cotton fibers.

It is found in the cytoplasm. Its function is as follows. Kinesin-like motor protein involved in the control of the oriented deposition of cellulose microfibrils. This Gossypium hirsutum (Upland cotton) protein is Kinesin-like protein KIN-4A.